We begin with the raw amino-acid sequence, 355 residues long: DNA polymerase IV (355 aa).

Positions 4–185 constitute a UmuC domain; it reads IIHVDMDCFY…LPLKKIPGVG (182 aa). Mg(2+) is bound by residues aspartate 8 and aspartate 103. The active site involves glutamate 104.

It belongs to the DNA polymerase type-Y family. Monomer. Requires Mg(2+) as cofactor.

It localises to the cytoplasm. It carries out the reaction DNA(n) + a 2'-deoxyribonucleoside 5'-triphosphate = DNA(n+1) + diphosphate. Poorly processive, error-prone DNA polymerase involved in untargeted mutagenesis. Copies undamaged DNA at stalled replication forks, which arise in vivo from mismatched or misaligned primer ends. These misaligned primers can be extended by PolIV. Exhibits no 3'-5' exonuclease (proofreading) activity. May be involved in translesional synthesis, in conjunction with the beta clamp from PolIII. The chain is DNA polymerase IV from Pasteurella multocida (strain Pm70).